The sequence spans 199 residues: Holliday junction branch migration complex subunit RuvA (199 aa).

The tract at residues 1 to 63 is domain I; sequence MIGCLIGEVF…EDAQQLYGFS (63 aa). Positions 64-142 are domain II; it reads DAQEKTIFRT…TLAQGTSSAA (79 aa). Residues 143-150 are flexible linker; that stretch reads ALPQIQFV. Positions 150–199 are domain III; that stretch reads VSNSPVAEAEAALQSLGYKPLEAQKAVAAVKADYTESADIIRAALKSMMK.

This sequence belongs to the RuvA family. As to quaternary structure, homotetramer. Forms an RuvA(8)-RuvB(12)-Holliday junction (HJ) complex. HJ DNA is sandwiched between 2 RuvA tetramers; dsDNA enters through RuvA and exits via RuvB. An RuvB hexamer assembles on each DNA strand where it exits the tetramer. Each RuvB hexamer is contacted by two RuvA subunits (via domain III) on 2 adjacent RuvB subunits; this complex drives branch migration. In the full resolvosome a probable DNA-RuvA(4)-RuvB(12)-RuvC(2) complex forms which resolves the HJ.

It is found in the cytoplasm. Functionally, the RuvA-RuvB-RuvC complex processes Holliday junction (HJ) DNA during genetic recombination and DNA repair, while the RuvA-RuvB complex plays an important role in the rescue of blocked DNA replication forks via replication fork reversal (RFR). RuvA specifically binds to HJ cruciform DNA, conferring on it an open structure. The RuvB hexamer acts as an ATP-dependent pump, pulling dsDNA into and through the RuvAB complex. HJ branch migration allows RuvC to scan DNA until it finds its consensus sequence, where it cleaves and resolves the cruciform DNA. This Acinetobacter baumannii (strain SDF) protein is Holliday junction branch migration complex subunit RuvA.